The primary structure comprises 239 residues: Ribosomal RNA small subunit methyltransferase G (239 aa).

Residues Gly77, Phe82, 128 to 129 (AE), and Arg146 contribute to the S-adenosyl-L-methionine site. Residues 217–239 (RRQTSKKYPRKPGTPNKSPLVES) form a disordered region.

This sequence belongs to the methyltransferase superfamily. RNA methyltransferase RsmG family.

The protein localises to the cytoplasm. In terms of biological role, specifically methylates the N7 position of guanine in position 535 of 16S rRNA. This chain is Ribosomal RNA small subunit methyltransferase G, found in Staphylococcus epidermidis (strain ATCC 12228 / FDA PCI 1200).